Reading from the N-terminus, the 380-residue chain is DNA replication and repair protein RecF (380 aa).

30–37 provides a ligand contact to ATP; that stretch reads GNNAQGKS.

This sequence belongs to the RecF family.

Its subcellular location is the cytoplasm. The RecF protein is involved in DNA metabolism; it is required for DNA replication and normal SOS inducibility. RecF binds preferentially to single-stranded, linear DNA. It also seems to bind ATP. This Crocosphaera subtropica (strain ATCC 51142 / BH68) (Cyanothece sp. (strain ATCC 51142)) protein is DNA replication and repair protein RecF.